The sequence spans 500 residues: NAD(P)H-quinone oxidoreductase chain 4, chloroplastic (500 aa).

14 helical membrane-spanning segments follow: residues 4-24 (FPWLTIIVVFPIFAGSLIFFL), 35-55 (YTICICILELLLTTYAFCYHF), 87-107 (IGPILLTGFITTLATLAAWPI), 113-130 (LFHFLMLAMYSGQIGSFS), 134-154 (LLLFFIMWELELIPVYLLLCM), 167-187 (FILYTAGGSVFLLMGVLGVAL), 208-228 (VLEIIFYIGFFIAFAVKSPII), 242-262 (HYSTCMLLAGILLKMGAYGLI), 272-292 (AHSIFSPWLMIIGTIQIIYAA), 305-325 (IAYSSVSHMGFIIIGISSLTD), 330-350 (GALLQIISHGFIGAALFFLAG), 386-406 (LALPGMSGFVAELIVFFGIIT), 411-431 (LLIPKILITFVMAIGMILTPI), and 462-482 (LFLSISIFLPVIGIGIYPDFV).

The protein belongs to the complex I subunit 4 family.

It localises to the plastid. It is found in the chloroplast thylakoid membrane. It catalyses the reaction a plastoquinone + NADH + (n+1) H(+)(in) = a plastoquinol + NAD(+) + n H(+)(out). The enzyme catalyses a plastoquinone + NADPH + (n+1) H(+)(in) = a plastoquinol + NADP(+) + n H(+)(out). The polypeptide is NAD(P)H-quinone oxidoreductase chain 4, chloroplastic (Nicotiana tomentosiformis (Tobacco)).